The following is a 150-amino-acid chain: NADH-quinone oxidoreductase subunit A (150 aa).

The next 3 membrane-spanning stretches (helical) occupy residues 14 to 34 (FAVFLIGAIGLCGLMLLGAFF), 66 to 86 (FYLVAMFFVIFDVEALYLYAW), and 96 to 116 (IGFIEATIFILVLLAGLVYLV).

It belongs to the complex I subunit 3 family. NDH-1 is composed of 13 different subunits. Subunits NuoA, H, J, K, L, M, N constitute the membrane sector of the complex.

It localises to the cell inner membrane. The catalysed reaction is a quinone + NADH + 5 H(+)(in) = a quinol + NAD(+) + 4 H(+)(out). NDH-1 shuttles electrons from NADH, via FMN and iron-sulfur (Fe-S) centers, to quinones in the respiratory chain. The immediate electron acceptor for the enzyme in this species is believed to be ubiquinone. Couples the redox reaction to proton translocation (for every two electrons transferred, four hydrogen ions are translocated across the cytoplasmic membrane), and thus conserves the redox energy in a proton gradient. The chain is NADH-quinone oxidoreductase subunit A from Yersinia enterocolitica serotype O:8 / biotype 1B (strain NCTC 13174 / 8081).